Here is a 238-residue protein sequence, read N- to C-terminus: Phosphoribosylaminoimidazole-succinocarboxamide synthase (238 aa).

This sequence belongs to the SAICAR synthetase family.

It catalyses the reaction 5-amino-1-(5-phospho-D-ribosyl)imidazole-4-carboxylate + L-aspartate + ATP = (2S)-2-[5-amino-1-(5-phospho-beta-D-ribosyl)imidazole-4-carboxamido]succinate + ADP + phosphate + 2 H(+). It participates in purine metabolism; IMP biosynthesis via de novo pathway; 5-amino-1-(5-phospho-D-ribosyl)imidazole-4-carboxamide from 5-amino-1-(5-phospho-D-ribosyl)imidazole-4-carboxylate: step 1/2. In Methanococcoides burtonii (strain DSM 6242 / NBRC 107633 / OCM 468 / ACE-M), this protein is Phosphoribosylaminoimidazole-succinocarboxamide synthase.